A 720-amino-acid polypeptide reads, in one-letter code: Pro-neuregulin-3, membrane-bound isoform (720 aa).

The Extracellular portion of the chain corresponds to 1–360 (MSEGAAAASP…MESEEVYQRQ (360 aa)). Disordered stretches follow at residues 28-48 (AAAA…AAEP), 119-223 (SSFP…AMPS), and 246-280 (PFQD…TTYS). Residues 34–44 (AGGGPDGGGEG) show a composition bias toward gly residues. Over residues 127 to 148 (TTTTTTSTTSPATPSAGGAASS) the composition is skewed to low complexity. The segment covering 149-163 (RTPNRISTRLTTITR) has biased composition (polar residues). Composition is skewed to low complexity over residues 187 to 205 (TAAP…SSST) and 250 to 271 (AASS…TSTS). The region spanning 286–329 (HFKPCRDKDLAYCLNDGECFVIETLTGSHKHCRCKEGYQGVRCD) is the EGF-like domain. Intrachain disulfides connect Cys290–Cys304, Cys298–Cys317, and Cys319–Cys328. Residues 361-381 (VLSISCIIFGIVIVGMFCAAF) form a helical membrane-spanning segment. Over 382 to 720 (YFKSKKQAKQ…EIQRDSALTK (339 aa)) the chain is Cytoplasmic. A disordered region spans residues 451–481 (PQSFPEVPSPDRGSQSVKHHRSLSSCCSPGQ).

The protein belongs to the neuregulin family. In terms of assembly, interacts with ERBB4. Proteolytic cleavage close to the plasma membrane on the external face leads to the release of the soluble growth factor form. Post-translationally, extensive glycosylation precedes the proteolytic cleavage. Isoform 3 is glycosylated. In terms of tissue distribution, highly expressed in most regions of the brain with the exception of corpus callosum. Expressed at lower level in testis. Not detected in heart, placenta, lung, liver, skeletal muscle, kidney, pancreas, spleen, thymus, prostate, ovary, small intestine, colon and peripheral blood leukocytes.

It localises to the cell membrane. It is found in the secreted. Direct ligand for the ERBB4 tyrosine kinase receptor. Binding results in ligand-stimulated tyrosine phosphorylation and activation of the receptor. Does not bind to the EGF receptor, ERBB2 or ERBB3 receptors. May be a survival factor for oligodendrocytes. The chain is Pro-neuregulin-3, membrane-bound isoform (NRG3) from Homo sapiens (Human).